A 345-amino-acid polypeptide reads, in one-letter code: Protein RecA (345 aa).

65-72 contacts ATP; it reads GPESSGKT.

Belongs to the RecA family.

Its subcellular location is the cytoplasm. In terms of biological role, can catalyze the hydrolysis of ATP in the presence of single-stranded DNA, the ATP-dependent uptake of single-stranded DNA by duplex DNA, and the ATP-dependent hybridization of homologous single-stranded DNAs. It interacts with LexA causing its activation and leading to its autocatalytic cleavage. The chain is Protein RecA from Campylobacter fetus subsp. fetus (strain 82-40).